We begin with the raw amino-acid sequence, 382 residues long: Chaperone protein DnaJ (382 aa).

A J domain is found at 5–70 (DYYDLLGLSK…DKRAAYDRYG (66 aa)). A CR-type zinc finger spans residues 138-216 (GTKVPINYVT…CSGSGRVRDE (79 aa)). Positions 151, 154, 168, 171, 190, 193, 204, and 207 each coordinate Zn(2+). CXXCXGXG motif repeat units lie at residues 151–158 (CSSCSGSG), 168–175 (CNTCHGAG), 190–197 (CHVCNGEG), and 204–211 (CKKCSGSG).

This sequence belongs to the DnaJ family. As to quaternary structure, homodimer. Requires Zn(2+) as cofactor.

It localises to the cytoplasm. Functionally, participates actively in the response to hyperosmotic and heat shock by preventing the aggregation of stress-denatured proteins and by disaggregating proteins, also in an autonomous, DnaK-independent fashion. Unfolded proteins bind initially to DnaJ; upon interaction with the DnaJ-bound protein, DnaK hydrolyzes its bound ATP, resulting in the formation of a stable complex. GrpE releases ADP from DnaK; ATP binding to DnaK triggers the release of the substrate protein, thus completing the reaction cycle. Several rounds of ATP-dependent interactions between DnaJ, DnaK and GrpE are required for fully efficient folding. Also involved, together with DnaK and GrpE, in the DNA replication of plasmids through activation of initiation proteins. In Ehrlichia ruminantium (strain Welgevonden), this protein is Chaperone protein DnaJ.